The primary structure comprises 374 residues: Lactoyl-CoA dehydratase subunit beta (374 aa).

Belongs to the FldB/FldC dehydratase alpha/beta subunit family. Heterodimer of an alpha (LcdA) and a beta (LcdB) subunit. [4Fe-4S] cluster serves as cofactor. It depends on FMN as a cofactor. Riboflavin is required as a cofactor. The cofactor is Mg(2+).

It carries out the reaction (R)-lactoyl-CoA = acryloyl-CoA + H2O. The enzyme catalyses (2R)-hydroxybutanoyl-CoA = (2E)-butenoyl-CoA + H2O. Activated by the LcdC protein. Involved in the acrylate pathway for the conversion of D-lactic acid to propionic acid. Catalyzes the reversible dehydration of Lactoyl-CoA and 2-hydroxybutyroyl-CoA to acryloyl-CoA and crotonyl-CoA, respectively. In Anaerotignum propionicum (Clostridium propionicum), this protein is Lactoyl-CoA dehydratase subunit beta (lcdB).